A 479-amino-acid polypeptide reads, in one-letter code: Ribosomal RNA small subunit methyltransferase F (479 aa).

S-adenosyl-L-methionine-binding positions include 125-131, glutamate 149, aspartate 176, and aspartate 194; that span reads AAAPGSK. The Nucleophile role is filled by cysteine 247.

This sequence belongs to the class I-like SAM-binding methyltransferase superfamily. RsmB/NOP family.

The protein localises to the cytoplasm. It carries out the reaction cytidine(1407) in 16S rRNA + S-adenosyl-L-methionine = 5-methylcytidine(1407) in 16S rRNA + S-adenosyl-L-homocysteine + H(+). Specifically methylates the cytosine at position 1407 (m5C1407) of 16S rRNA. The sequence is that of Ribosomal RNA small subunit methyltransferase F from Salmonella paratyphi C (strain RKS4594).